Here is a 24-residue protein sequence, read N- to C-terminus: Brevinin-1CSa (24 aa).

A disulfide bridge connects residues C18 and C24.

In terms of tissue distribution, expressed by the skin glands.

The protein resides in the secreted. The protein localises to the target cell membrane. Its function is as follows. Antibacterial peptide. Has activity against the Gram-positive bacterium S.aureus (MIC=2 uM) and the Gram-negative bacterium E.coli (MIC=32 uM). Has a strong hemolytic activity (LC(50)=5 uM). This Rana cascadae (Cascades frog) protein is Brevinin-1CSa.